Reading from the N-terminus, the 104-residue chain is Large ribosomal subunit protein uL24 (104 aa).

The protein belongs to the universal ribosomal protein uL24 family. As to quaternary structure, part of the 50S ribosomal subunit.

In terms of biological role, one of two assembly initiator proteins, it binds directly to the 5'-end of the 23S rRNA, where it nucleates assembly of the 50S subunit. Its function is as follows. One of the proteins that surrounds the polypeptide exit tunnel on the outside of the subunit. In Brevibacillus brevis (strain 47 / JCM 6285 / NBRC 100599), this protein is Large ribosomal subunit protein uL24.